Consider the following 264-residue polypeptide: Somatomedin-B and thrombospondin type-1 domain-containing protein (264 aa).

The N-terminal stretch at M1 to A20 is a signal peptide. The SMB domain maps to E24–C75. Intrachain disulfides connect C28–C36, C28–C52, C36–C70, C50–C52, C50–C63, C56–C62, and C63–C70. Positions P74–P127 constitute a TSP type-1 domain. N227 carries an N-linked (GlcNAc...) asparagine glycan.

Belongs to the thrombospondin family. In terms of tissue distribution, detected in aorta extracellular matrix (at protein level).

The protein localises to the secreted. It is found in the extracellular space. The protein resides in the extracellular matrix. This is Somatomedin-B and thrombospondin type-1 domain-containing protein (SBSPON) from Homo sapiens (Human).